We begin with the raw amino-acid sequence, 869 residues long: DNA mismatch repair protein MutS (869 aa).

624 to 631 (GPNMGGKS) serves as a coordination point for ATP.

Belongs to the DNA mismatch repair MutS family.

In terms of biological role, this protein is involved in the repair of mismatches in DNA. It is possible that it carries out the mismatch recognition step. This protein has a weak ATPase activity. In Solibacter usitatus (strain Ellin6076), this protein is DNA mismatch repair protein MutS.